We begin with the raw amino-acid sequence, 225 residues long: Ribose-5-phosphate isomerase A (225 aa).

Residues 26–29 (TGST), 82–85 (DGAD), and 95–98 (KGGG) contribute to the substrate site. The active-site Proton acceptor is E104. K122 contributes to the substrate binding site.

Belongs to the ribose 5-phosphate isomerase family. As to quaternary structure, homodimer.

It catalyses the reaction aldehydo-D-ribose 5-phosphate = D-ribulose 5-phosphate. The protein operates within carbohydrate degradation; pentose phosphate pathway; D-ribose 5-phosphate from D-ribulose 5-phosphate (non-oxidative stage): step 1/1. Functionally, catalyzes the reversible conversion of ribose-5-phosphate to ribulose 5-phosphate. This chain is Ribose-5-phosphate isomerase A, found in Streptococcus gordonii (strain Challis / ATCC 35105 / BCRC 15272 / CH1 / DL1 / V288).